A 419-amino-acid polypeptide reads, in one-letter code: 3-isopropylmalate dehydratase large subunit (419 aa).

3 residues coordinate [4Fe-4S] cluster: cysteine 302, cysteine 362, and cysteine 365.

It belongs to the aconitase/IPM isomerase family. LeuC type 2 subfamily. In terms of assembly, heterodimer of LeuC and LeuD. [4Fe-4S] cluster is required as a cofactor.

It carries out the reaction (2R,3S)-3-isopropylmalate = (2S)-2-isopropylmalate. The protein operates within amino-acid biosynthesis; L-leucine biosynthesis; L-leucine from 3-methyl-2-oxobutanoate: step 2/4. Functionally, catalyzes the isomerization between 2-isopropylmalate and 3-isopropylmalate, via the formation of 2-isopropylmaleate. This chain is 3-isopropylmalate dehydratase large subunit, found in Sulfurimonas denitrificans (strain ATCC 33889 / DSM 1251) (Thiomicrospira denitrificans (strain ATCC 33889 / DSM 1251)).